Reading from the N-terminus, the 166-residue chain is MLVPAPFLLVLLLLLGAPQVGLSQRSPKAGSSPSCLHTALREAEKSQRKDTSLLIKRTFPALPRGDPEDQEGQEEEDTEKRTFPGSVGGGGGGGAGSTRYKYPSQAQFQGRPSQDKAKSDRRTKVTLSLDVPTNIMNILFNIAKAKNLRAKAAANAHLMAQIGRKK.

A signal peptide spans 1 to 23 (MLVPAPFLLVLLLLLGAPQVGLS). Residues 24-123 (QRSPKAGSSP…QDKAKSDRRT (100 aa)) constitute a propeptide that is removed on maturation. Residues 41–51 (REAEKSQRKDT) are compositionally biased toward basic and acidic residues. Positions 41–123 (REAEKSQRKD…QDKAKSDRRT (83 aa)) are disordered. The segment covering 68–77 (EDQEGQEEED) has biased composition (acidic residues). The span at 86–96 (SVGGGGGGGAG) shows a compositional bias: gly residues. The span at 113-123 (SQDKAKSDRRT) shows a compositional bias: basic and acidic residues. Ile162 carries the isoleucine amide modification.

This sequence belongs to the sauvagine/corticotropin-releasing factor/urotensin I family. Binds with high affinity to CRF receptors 2-alpha and 2-beta.

It localises to the secreted. Suppresses food intake, delays gastric emptying and decreases heat-induced edema. Might represent an endogenous ligand for maintaining homeostasis after stress. In Bos taurus (Bovine), this protein is Urocortin-3 (UCN3).